Reading from the N-terminus, the 1368-residue chain is DNA-directed RNA polymerase subunit beta (1368 aa).

It belongs to the RNA polymerase beta chain family. As to quaternary structure, the RNAP catalytic core consists of 2 alpha, 1 beta, 1 beta' and 1 omega subunit. When a sigma factor is associated with the core the holoenzyme is formed, which can initiate transcription.

It carries out the reaction RNA(n) + a ribonucleoside 5'-triphosphate = RNA(n+1) + diphosphate. DNA-dependent RNA polymerase catalyzes the transcription of DNA into RNA using the four ribonucleoside triphosphates as substrates. The chain is DNA-directed RNA polymerase subunit beta from Burkholderia ambifaria (strain ATCC BAA-244 / DSM 16087 / CCUG 44356 / LMG 19182 / AMMD) (Burkholderia cepacia (strain AMMD)).